Here is a 233-residue protein sequence, read N- to C-terminus: uncharacterized protein (233 aa).

Positions 16–84 (KTLAKQVIER…TRGGTYFNDK (69 aa)) constitute an HTH gntR-type domain. The segment at residues 44–63 (EMELMDILHVSRPVLREALS) is a DNA-binding region (H-T-H motif).

This is an uncharacterized protein from Bacillus subtilis (strain 168).